Reading from the N-terminus, the 131-residue chain is Profilin (131 aa).

It belongs to the profilin family. Occurs in many kinds of cells as a complex with monomeric actin in a 1:1 ratio.

Its subcellular location is the cytoplasm. The protein localises to the cytoskeleton. Functionally, binds to actin and affects the structure of the cytoskeleton. At high concentrations, profilin prevents the polymerization of actin, whereas it enhances it at low concentrations. By binding to PIP2, it inhibits the formation of IP3 and DG. In Litchi chinensis (Lychee), this protein is Profilin.